We begin with the raw amino-acid sequence, 311 residues long: Formimidoylglutamase (311 aa).

Mn(2+) contacts are provided by H130, D155, H157, D159, C242, and D244.

This sequence belongs to the arginase family. Mn(2+) serves as cofactor.

It carries out the reaction N-formimidoyl-L-glutamate + H2O = formamide + L-glutamate. It participates in amino-acid degradation; L-histidine degradation into L-glutamate; L-glutamate from N-formimidoyl-L-glutamate (hydrolase route): step 1/1. In terms of biological role, catalyzes the conversion of N-formimidoyl-L-glutamate to L-glutamate and formamide. The chain is Formimidoylglutamase from Staphylococcus aureus (strain Mu3 / ATCC 700698).